Consider the following 937-residue polypeptide: Outer membrane usher protein CS3-2 (937 aa).

This sequence belongs to the fimbrial export usher family. Post-translationally, a 97 kDa form of the protein is thought to be due to post-translational processing of isoform 104 kDa.

It is found in the cell outer membrane. Its function is as follows. These proteins are essential for the biogenesis of mature CS3 pili, but not for synthesis of the CS3 pilin subunit. The chain is Outer membrane usher protein CS3-2 from Escherichia coli.